The sequence spans 156 residues: Ribonuclease pancreatic (156 aa).

A signal peptide spans 1–28 (MALEKSLVLLPLLVLILLVLGWVQPSLG). Residues 33-43 (AKKFQRQHMDS) show a composition bias toward basic and acidic residues. The tract at residues 33 to 52 (AKKFQRQHMDSDSSPSSNST) is disordered. Residues K35 and R38 each coordinate substrate. H40 functions as the Proton acceptor in the catalytic mechanism. N-linked (GlcNAc...) asparagine glycans are attached at residues N50 and N62. Cystine bridges form between C54–C112, C68–C123, C86–C138, and C93–C100. Substrate contacts are provided by residues 69-73 (KPVNT) and K94. An N-linked (GlcNAc...) asparagine glycan is attached at N104. Position 113 (R113) interacts with substrate. The N-linked (GlcNAc...) asparagine glycan is linked to N116. H147 serves as the catalytic Proton donor.

The protein belongs to the pancreatic ribonuclease family. In terms of assembly, monomer. Interacts with and forms tight 1:1 complexes with RNH1. Dimerization of two such complexes may occur. Interaction with RNH1 inhibits this protein.

Its subcellular location is the secreted. The enzyme catalyses an [RNA] containing cytidine + H2O = an [RNA]-3'-cytidine-3'-phosphate + a 5'-hydroxy-ribonucleotide-3'-[RNA].. It catalyses the reaction an [RNA] containing uridine + H2O = an [RNA]-3'-uridine-3'-phosphate + a 5'-hydroxy-ribonucleotide-3'-[RNA].. In terms of biological role, endonuclease that catalyzes the cleavage of RNA on the 3' side of pyrimidine nucleotides. Acts on single-stranded and double-stranded RNA. This Gorilla gorilla gorilla (Western lowland gorilla) protein is Ribonuclease pancreatic (RNASE1).